A 565-amino-acid polypeptide reads, in one-letter code: Proline--tRNA ligase (565 aa).

It belongs to the class-II aminoacyl-tRNA synthetase family. ProS type 1 subfamily. Homodimer.

The protein resides in the cytoplasm. It catalyses the reaction tRNA(Pro) + L-proline + ATP = L-prolyl-tRNA(Pro) + AMP + diphosphate. Catalyzes the attachment of proline to tRNA(Pro) in a two-step reaction: proline is first activated by ATP to form Pro-AMP and then transferred to the acceptor end of tRNA(Pro). As ProRS can inadvertently accommodate and process non-cognate amino acids such as alanine and cysteine, to avoid such errors it has two additional distinct editing activities against alanine. One activity is designated as 'pretransfer' editing and involves the tRNA(Pro)-independent hydrolysis of activated Ala-AMP. The other activity is designated 'posttransfer' editing and involves deacylation of mischarged Ala-tRNA(Pro). The misacylated Cys-tRNA(Pro) is not edited by ProRS. The sequence is that of Proline--tRNA ligase from Bacillus pumilus (strain SAFR-032).